A 604-amino-acid polypeptide reads, in one-letter code: Prostaglandin G/H synthase 2 (604 aa).

The first 17 residues, 1-17 (MLARALLLCVALALGHA), serve as a signal peptide directing secretion. An EGF-like domain is found at 18–55 (ANPCCSNPCQNRGVCMSVGFDQYQCDCTRTGFYGENCS). Intrachain disulfides connect C21–C32, C22–C145, C26–C42, and C44–C54. Residue N53 is glycosylated (N-linked (GlcNAc...) asparagine). R106 provides a ligand contact to substrate. An N-linked (GlcNAc...) asparagine glycan is attached at N130. Residue H193 is the Proton acceptor of the active site. Y341 is a substrate binding site. Y371 functions as the For cyclooxygenase activity in the catalytic mechanism. H374 provides a ligand contact to heme b. A glycan (N-linked (GlcNAc...) asparagine) is linked at N396. C526 carries the S-nitrosocysteine modification. C555 and C561 are oxidised to a cystine. A glycan (N-linked (GlcNAc...) asparagine) is linked at N580.

The protein belongs to the prostaglandin G/H synthase family. In terms of assembly, homodimer. The cofactor is heme b. S-nitrosylation by NOS2 (iNOS) activates enzyme activity. S-nitrosylation may take place on different Cys residues in addition to Cys-526.

The protein resides in the microsome membrane. It is found in the endoplasmic reticulum membrane. Its subcellular location is the nucleus inner membrane. The protein localises to the nucleus outer membrane. The catalysed reaction is (5Z,8Z,11Z,14Z)-eicosatetraenoate + AH2 + 2 O2 = prostaglandin H2 + A + H2O. The enzyme catalyses (5Z,8Z,11Z,14Z)-eicosatetraenoate + 2 O2 = prostaglandin G2. It catalyses the reaction prostaglandin G2 + AH2 = prostaglandin H2 + A + H2O. It carries out the reaction (5Z,8Z,11Z,14Z,17Z)-eicosapentaenoate + 2 O2 = prostaglandin G3. The catalysed reaction is prostaglandin G3 + AH2 = prostaglandin H3 + A + H2O. The enzyme catalyses (8Z,11Z,14Z)-eicosatrienoate + 2 O2 = prostaglandin G1. It catalyses the reaction prostaglandin G1 + AH2 = prostaglandin H1 + A + H2O. It carries out the reaction 2-(5Z,8Z,11Z,14Z)-eicosatetraenoyl-sn-glycero-3-phosphoethanolamine + 2 O2 = 2-(prostaglandin G2)-sn-glycero-3-phosphoethanolamine. The catalysed reaction is 2-(prostaglandin G2)-sn-glycero-3-phosphoethanolamine + AH2 = 2-(prostaglandin H2)-sn-glycero-3-phosphoethanolamine + A + H2O. The enzyme catalyses 2-(5Z,8Z,11Z,14Z)-eicosatetraenoyl-sn-glycero-3-phosphocholine + 2 O2 = 2-(prostaglandin G2)-sn-glycero-3-phosphocholine. It catalyses the reaction 2-(prostaglandin G2)-sn-glycero-3-phosphocholine + AH2 = 2-(prostaglandin H2)-sn-glycero-3-phosphocholine + A + H2O. It carries out the reaction (15S)-hydroperoxy-(5Z,8Z,11Z,13E)-eicosatetraenoate + AH2 = (15S)-hydroxy-(5Z,8Z,11Z,13E)-eicosatetraenoate + A + H2O. The catalysed reaction is 2-(5Z,8Z,11Z,14Z)-eicosatetraenoyl-sn-glycero-3-phosphocholine + AH2 + O2 = 2-[(15S)-hydroxy-(5Z,8Z,11Z,13E)-eicosatetraenoyl]-sn-glycero-3-phosphocholine + A + H2O. The enzyme catalyses 2-(5Z,8Z,11Z,14Z)-eicosatetraenoyl-sn-glycero-3-phosphocholine + AH2 + O2 = 2-[(15R)-hydroxy-(5Z,8Z,11Z,13E)-eicosatetraenoyl]-sn-glycero-3-phosphocholine + A + H2O. It catalyses the reaction 2-(5Z,8Z,11Z,14Z)-eicosatetraenoyl-sn-glycero-3-phosphocholine + AH2 + O2 = 2-[(11R)-hydroxy-(5Z,8Z,12E,14Z)-eicosatetraenoyl]-sn-glycero-3-phosphocholine + A + H2O. It carries out the reaction (9Z,12Z)-octadecadienoate + AH2 + O2 = 9-hydroxy-(10E,12Z)-octadecadienoate + A + H2O. The catalysed reaction is (9Z,12Z)-octadecadienoate + AH2 + O2 = 13-hydroxy-(9Z,11E)-octadecadienoate + A + H2O. The enzyme catalyses (5Z,8Z,11Z,14Z)-eicosatetraenoate + AH2 + O2 = (15R)-hydroxy-(5Z,8Z,11Z,13E)-eicosatetraenoate + A + H2O. It catalyses the reaction (5Z,8Z,11Z,14Z)-eicosatetraenoate + AH2 + O2 = (11R)-hydroxy-(5Z,8Z,12E,14Z)-eicosatetraenoate + A + H2O. It carries out the reaction (5Z,8Z,11Z,14Z,17Z)-eicosapentaenoate + AH2 + O2 = (11R)-hydroxy-(5Z,8Z,12E,14Z,17Z)-eicosapentaenoate + A + H2O. The catalysed reaction is (5Z,8Z,11Z,14Z,17Z)-eicosapentaenoate + AH2 + O2 = (18S)-hydroxy-(5Z,8Z,11Z,14Z,16E)-eicosapentaenoate + A + H2O. The enzyme catalyses (5Z,8Z,11Z,14Z,17Z)-eicosapentaenoate + AH2 + O2 = (18R)-hydroxy-(5Z,8Z,11Z,14Z,16E)-eicosapentaenoate + A + H2O. It catalyses the reaction (5Z,8Z,11Z,14Z,17Z)-eicosapentaenoate + AH2 + O2 = (15R)-hydroxy-(5Z,8Z,11Z,13E,17Z)-eicosapentaenoate + A + H2O. It carries out the reaction (5Z,8Z,11Z,14Z,17Z)-eicosapentaenoate + AH2 + O2 = (15S)-hydroxy-(5Z,8Z,11Z,13E,17Z)-eicosapentaenoate + A + H2O. The catalysed reaction is (7Z,10Z,13Z,16Z,19Z)-docosapentaenoate + AH2 + O2 = 13R-hydroxy-(7Z,10Z,14E,16Z,19Z)-docosapentaenoate + A + H2O. The enzyme catalyses (4Z,7Z,10Z,13Z,16Z,19Z)-docosahexaenoate + AH2 + O2 = 13-hydroxy-(4Z,7Z,10Z,14E,16Z,19Z)-docosahexaenoate + A + H2O. It catalyses the reaction (5S)-hydroxy-(6E,8Z,11Z,14Z)-eicosatetraenoate + AH2 + O2 = (5S,15R)-dihydroxy-(6E,8Z,11Z,13E)-eicosatetraenoate + A + H2O. It carries out the reaction (4Z,7Z,10Z,13Z,16Z,19Z)-docosahexaenoate + AH2 + O2 = 17R-hydroxy-(4Z,7Z,10Z,13Z,15E,19Z)-docosahexaenoate + A + H2O. The catalysed reaction is (5S)-hydroxy-(6E,8Z,11Z,14Z)-eicosatetraenoate + AH2 + O2 = (5S,15S)-dihydroxy-(6E,8Z,11Z,13E)-eicosatetraenoate + A + H2O. The enzyme catalyses (5S)-hydroxy-(6E,8Z,11Z,14Z)-eicosatetraenoate + AH2 + O2 = (5S,11R)-dihydroxy-(6E,8Z,12E,14Z)-eicosatetraenoate + A + H2O. It catalyses the reaction 2-(5Z,8Z,11Z,14Z-eicosatetraenoyl)-glycerol + 2 O2 = 2-glyceryl-prostaglandin G2. It carries out the reaction 2-glyceryl-prostaglandin G2 + AH2 = 2-glyceryl-prostaglandin H2 + A + H2O. The catalysed reaction is (5Z,8Z,11Z,14Z)-eicosatetraenoate + O2 = (15R)-hydroperoxy-(5Z,8Z,11Z,13E)-eicosatetraenoate. The enzyme catalyses (5Z,8Z,11Z,14Z)-eicosatetraenoate + O2 = 11R-hydroperoxy-(5Z,8Z,12E,14Z)-eicosatetraenoate. It catalyses the reaction (9Z,12Z)-octadecadienoate + AH2 + O2 = (9R)-hydroxy-(10E,12Z)-octadecadienoate + A + H2O. It carries out the reaction (9Z,12Z)-octadecadienoate + AH2 + O2 = (9S)-hydroxy-(10E,12Z)-octadecadienoate + A + H2O. The catalysed reaction is (9Z,12Z)-octadecadienoate + AH2 + O2 = (13S)-hydroxy-(9Z,11E)-octadecadienoate + A + H2O. The enzyme catalyses (9Z,12Z)-octadecadienoate + AH2 + O2 = (13R)-hydroxy-(9Z,11E)-octadecadienoate + A + H2O. Its pathway is lipid metabolism; prostaglandin biosynthesis. Dual cyclooxygenase and peroxidase in the biosynthesis pathway of prostanoids, a class of C20 oxylipins mainly derived from arachidonate ((5Z,8Z,11Z,14Z)-eicosatetraenoate, AA, C20:4(n-6)), with a particular role in the inflammatory response. The cyclooxygenase activity oxygenates AA to the hydroperoxy endoperoxide prostaglandin G2 (PGG2), and the peroxidase activity reduces PGG2 to the hydroxy endoperoxide prostaglandin H2 (PGH2), the precursor of all 2-series prostaglandins and thromboxanes. This complex transformation is initiated by abstraction of hydrogen at carbon 13 (with S-stereochemistry), followed by insertion of molecular O2 to form the endoperoxide bridge between carbon 9 and 11 that defines prostaglandins. The insertion of a second molecule of O2 (bis-oxygenase activity) yields a hydroperoxy group in PGG2 that is then reduced to PGH2 by two electrons. Similarly catalyzes successive cyclooxygenation and peroxidation of dihomo-gamma-linoleate (DGLA, C20:3(n-6)) and eicosapentaenoate (EPA, C20:5(n-3)) to corresponding PGH1 and PGH3, the precursors of 1- and 3-series prostaglandins. In an alternative pathway of prostanoid biosynthesis, converts 2-arachidonoyl lysophopholipids to prostanoid lysophopholipids, which are then hydrolyzed by intracellular phospholipases to release free prostanoids. Metabolizes 2-arachidonoyl glycerol yielding the glyceryl ester of PGH2, a process that can contribute to pain response. Generates lipid mediators from n-3 and n-6 polyunsaturated fatty acids (PUFAs) via a lipoxygenase-type mechanism. Oxygenates PUFAs to hydroperoxy compounds and then reduces them to corresponding alcohols. Plays a role in the generation of resolution phase interaction products (resolvins) during both sterile and infectious inflammation. Metabolizes docosahexaenoate (DHA, C22:6(n-3)) to 17R-HDHA, a precursor of the D-series resolvins (RvDs). As a component of the biosynthetic pathway of E-series resolvins (RvEs), converts eicosapentaenoate (EPA, C20:5(n-3)) primarily to 18S-HEPE that is further metabolized by ALOX5 and LTA4H to generate 18S-RvE1 and 18S-RvE2. In vascular endothelial cells, converts docosapentaenoate (DPA, C22:5(n-3)) to 13R-HDPA, a precursor for 13-series resolvins (RvTs) shown to activate macrophage phagocytosis during bacterial infection. In activated leukocytes, contributes to oxygenation of hydroxyeicosatetraenoates (HETE) to diHETES (5,15-diHETE and 5,11-diHETE). Can also use linoleate (LA, (9Z,12Z)-octadecadienoate, C18:2(n-6)) as substrate and produce hydroxyoctadecadienoates (HODEs) in a regio- and stereospecific manner, being (9R)-HODE ((9R)-hydroxy-(10E,12Z)-octadecadienoate) and (13S)-HODE ((13S)-hydroxy-(9Z,11E)-octadecadienoate) its major products. During neuroinflammation, plays a role in neuronal secretion of specialized preresolving mediators (SPMs) 15R-lipoxin A4 that regulates phagocytic microglia. In Equus caballus (Horse), this protein is Prostaglandin G/H synthase 2 (PTGS2).